Here is a 447-residue protein sequence, read N- to C-terminus: GTPase Der (447 aa).

EngA-type G domains lie at Lys4–Glu165 and Leu180–Asn357. Residues Gly10–Ser17, Asp57–Leu61, Asn119–Glu122, Gly186–Ser193, Asp233–Leu237, and Asn298–Asp301 contribute to the GTP site. The KH-like domain occupies Lys358–Lys443.

Belongs to the TRAFAC class TrmE-Era-EngA-EngB-Septin-like GTPase superfamily. EngA (Der) GTPase family. As to quaternary structure, associates with the 50S ribosomal subunit.

GTPase that plays an essential role in the late steps of ribosome biogenesis. This is GTPase Der from Rickettsia typhi (strain ATCC VR-144 / Wilmington).